The primary structure comprises 474 residues: Serine/threonine-protein kinase VRK3 (474 aa).

Over residues 41–58 (HVSSFQGSKRGLNSSFET) the composition is skewed to polar residues. The segment at 41-152 (HVSSFQGSKR…SRVTTSLEAL (112 aa)) is disordered. Residues 49–64 (KRGLNSSFETSPKKVK) carry the Nuclear localization signal motif. Phosphoserine occurs at positions 54, 55, 59, 82, 83, and 90. The span at 88 to 101 (TLSSSERSKGSGSR) shows a compositional bias: low complexity. The segment covering 107–149 (SSPQKTRKSPQVTRGSPQKTSCSPQKTRQSPQTLKRSRVTTSL) has biased composition (polar residues). Ser-108 carries the phosphoserine; by CDK5 modification. Residues Ser-115 and Ser-122 each carry the phosphoserine modification. Residues 166-457 (WKLKSFQTRD…MLRNNLEALL (292 aa)) enclose the Protein kinase domain.

The protein belongs to the protein kinase superfamily. CK1 Ser/Thr protein kinase family. VRK subfamily. As to quaternary structure, interacts with DUSP3. Interacts with RAN. Interacts with HSP70/HSPA1A. Phosphorylated at Ser-108 by CDK5; leading to protection of the cell against H2O2-induced apoptosis. In terms of processing, ubiquitinated by RNF144A.

It localises to the nucleus. The protein localises to the cytoplasm. The catalysed reaction is L-seryl-[protein] + ATP = O-phospho-L-seryl-[protein] + ADP + H(+). Functionally, plays a role in the regulation of the cell cycle by phosphorylating the nuclear envelope protein barrier-to-autointegration factor/BAF that is required for disassembly and reassembly, respectively, of the nuclear envelope during mitosis. Under normal physiological conditions, negatively regulates ERK activity along with VHR/DUSP3 phosphatase in the nucleus, causing timely and transient action of ERK. Stress conditions activate CDK5 which phosphorylates VRK3 to increase VHR phosphatase activity and suppress prolonged ERK activation that causes cell death. For example, upon glutamate induction, promotes nuclear localization of HSP70/HSPA1A to inhibit ERK activation via VHR/DUSP3 phosphatase. This is Serine/threonine-protein kinase VRK3 (VRK3) from Homo sapiens (Human).